The following is a 387-amino-acid chain: 3-ketoacyl-CoA thiolase (387 aa).

Cys91 serves as the catalytic Acyl-thioester intermediate. Catalysis depends on proton acceptor residues His343 and Cys373.

This sequence belongs to the thiolase-like superfamily. Thiolase family. As to quaternary structure, heterotetramer of two alpha chains (FadB) and two beta chains (FadA).

The protein localises to the cytoplasm. It catalyses the reaction an acyl-CoA + acetyl-CoA = a 3-oxoacyl-CoA + CoA. It participates in lipid metabolism; fatty acid beta-oxidation. Functionally, catalyzes the final step of fatty acid oxidation in which acetyl-CoA is released and the CoA ester of a fatty acid two carbons shorter is formed. This Shewanella sp. (strain W3-18-1) protein is 3-ketoacyl-CoA thiolase.